A 278-amino-acid polypeptide reads, in one-letter code: Ribosomal protein L11 methyltransferase (278 aa).

Thr131, Gly152, Asp173, and Asn214 together coordinate S-adenosyl-L-methionine.

The protein belongs to the methyltransferase superfamily. PrmA family.

The protein localises to the cytoplasm. The catalysed reaction is L-lysyl-[protein] + 3 S-adenosyl-L-methionine = N(6),N(6),N(6)-trimethyl-L-lysyl-[protein] + 3 S-adenosyl-L-homocysteine + 3 H(+). In terms of biological role, methylates ribosomal protein L11. The polypeptide is Ribosomal protein L11 methyltransferase (Campylobacter lari (strain RM2100 / D67 / ATCC BAA-1060)).